The sequence spans 608 residues: Malonate--CoA ligase (608 aa).

It belongs to the ATP-dependent AMP-binding enzyme family. Expressed in flowers.

It localises to the cytoplasm. Its subcellular location is the nucleus. The enzyme catalyses malonate + ATP + CoA = malonyl-CoA + AMP + diphosphate. Its function is as follows. Malonate--CoA ligase that catalyzes the formation of malonyl-CoA directly from malonate and CoA. May be required for the detoxification of malonate. The protein is Malonate--CoA ligase (AAE13) of Arabidopsis thaliana (Mouse-ear cress).